We begin with the raw amino-acid sequence, 392 residues long: Magnesium-chelatase 38 kDa subunit (392 aa).

Low complexity predominate over residues 1–17; sequence MTQTANAAKKTTSTKAS. A disordered region spans residues 1 to 21; it reads MTQTANAAKKTTSTKASAAKE. ATP is bound at residue 80-87; the sequence is GHRGTGKS.

It belongs to the Mg-chelatase subunits D/I family.

The catalysed reaction is protoporphyrin IX + Mg(2+) + ATP + H2O = Mg-protoporphyrin IX + ADP + phosphate + 3 H(+). It participates in porphyrin-containing compound metabolism; bacteriochlorophyll biosynthesis. Involved in bacteriochlorophyll biosynthesis; introduces a magnesium ion into protoporphyrin IX to yield Mg-protoporphyrin IX. This is Magnesium-chelatase 38 kDa subunit (bchI) from Chlorobaculum tepidum (strain ATCC 49652 / DSM 12025 / NBRC 103806 / TLS) (Chlorobium tepidum).